We begin with the raw amino-acid sequence, 91 residues long: Probable Fe(2+)-trafficking protein (91 aa).

The protein belongs to the Fe(2+)-trafficking protein family. As to quaternary structure, monomer.

In terms of biological role, could be a mediator in iron transactions between iron acquisition and iron-requiring processes, such as synthesis and/or repair of Fe-S clusters in biosynthetic enzymes. The chain is Probable Fe(2+)-trafficking protein from Klebsiella pneumoniae (strain 342).